Reading from the N-terminus, the 610-residue chain is UvrABC system protein C (610 aa).

The GIY-YIG domain maps to 16 to 94; it reads SQPGVYRMYD…IKLYQPRYNV (79 aa). The 36-residue stretch at 204-239 folds into the UVR domain; it reads DQVLTQLISRMETASQNLEFEEAARIRDQIQAVRRV.

This sequence belongs to the UvrC family. As to quaternary structure, interacts with UvrB in an incision complex.

The protein localises to the cytoplasm. The UvrABC repair system catalyzes the recognition and processing of DNA lesions. UvrC both incises the 5' and 3' sides of the lesion. The N-terminal half is responsible for the 3' incision and the C-terminal half is responsible for the 5' incision. The chain is UvrABC system protein C from Escherichia coli (strain UTI89 / UPEC).